The sequence spans 213 residues: ATP synthase subunit b 2 (213 aa).

A disordered region spans residues 1–45; it reads MFVTEAYAQSAPTVGETHTETPAVGQPQPEATHTETGVAHGAEHG. Residues 57-76 traverse the membrane as a helical segment; the sequence is TYASQVLWLAITFGLFYLLM.

Belongs to the ATPase B chain family. In terms of assembly, F-type ATPases have 2 components, F(1) - the catalytic core - and F(0) - the membrane proton channel. F(1) has five subunits: alpha(3), beta(3), gamma(1), delta(1), epsilon(1). F(0) has three main subunits: a(1), b(2) and c(10-14). The alpha and beta chains form an alternating ring which encloses part of the gamma chain. F(1) is attached to F(0) by a central stalk formed by the gamma and epsilon chains, while a peripheral stalk is formed by the delta and b chains.

It localises to the cell inner membrane. In terms of biological role, f(1)F(0) ATP synthase produces ATP from ADP in the presence of a proton or sodium gradient. F-type ATPases consist of two structural domains, F(1) containing the extramembraneous catalytic core and F(0) containing the membrane proton channel, linked together by a central stalk and a peripheral stalk. During catalysis, ATP synthesis in the catalytic domain of F(1) is coupled via a rotary mechanism of the central stalk subunits to proton translocation. Component of the F(0) channel, it forms part of the peripheral stalk, linking F(1) to F(0). The b'-subunit is a diverged and duplicated form of b found in plants and photosynthetic bacteria. The protein is ATP synthase subunit b 2 (atpF2) of Agrobacterium fabrum (strain C58 / ATCC 33970) (Agrobacterium tumefaciens (strain C58)).